We begin with the raw amino-acid sequence, 325 residues long: Peroxidase 1 (325 aa).

Positions 1–21 (MAIKNILALVVLLSVVGVSVA) are cleaved as a signal peptide. 4 disulfide bridges follow: Cys35/Cys113, Cys68/Cys73, Cys119/Cys321, and Cys198/Cys230. His66 (proton acceptor) is an active-site residue. Positions 67, 70, 72, 74, and 76 each coordinate Ca(2+). Pro161 lines the substrate pocket. Residue His191 coordinates heme b. Thr192 contacts Ca(2+). Asn207 carries an N-linked (GlcNAc...) asparagine glycan. Positions 242, 245, and 250 each coordinate Ca(2+).

Belongs to the peroxidase family. Classical plant (class III) peroxidase subfamily. Heme b serves as cofactor. It depends on Ca(2+) as a cofactor. In terms of tissue distribution, slightly expressed in roots.

It is found in the secreted. It catalyses the reaction 2 a phenolic donor + H2O2 = 2 a phenolic radical donor + 2 H2O. In terms of biological role, removal of H(2)O(2), oxidation of toxic reductants, biosynthesis and degradation of lignin, suberization, auxin catabolism, response to environmental stresses such as wounding, pathogen attack and oxidative stress. These functions might be dependent on each isozyme/isoform in each plant tissue. The protein is Peroxidase 1 (PER1) of Arabidopsis thaliana (Mouse-ear cress).